A 430-amino-acid polypeptide reads, in one-letter code: Ribosomal protein uS12 methylthiotransferase RimO (430 aa).

An MTTase N-terminal domain is found at 2–119; that stretch reads ISVYSISLGC…WPEMIGRALG (118 aa). 6 residues coordinate [4Fe-4S] cluster: C11, C46, C81, C145, C149, and C152. Residues 131–361 form the Radical SAM core domain; the sequence is STGPSYAYLK…MEVQAEISEE (231 aa). In terms of domain architecture, TRAM spans 364 to 430; that stretch reads EGFTGSDEDV…SRTYDLVALS (67 aa).

It belongs to the methylthiotransferase family. RimO subfamily. It depends on [4Fe-4S] cluster as a cofactor.

It localises to the cytoplasm. It carries out the reaction L-aspartate(89)-[ribosomal protein uS12]-hydrogen + (sulfur carrier)-SH + AH2 + 2 S-adenosyl-L-methionine = 3-methylsulfanyl-L-aspartate(89)-[ribosomal protein uS12]-hydrogen + (sulfur carrier)-H + 5'-deoxyadenosine + L-methionine + A + S-adenosyl-L-homocysteine + 2 H(+). Functionally, catalyzes the methylthiolation of an aspartic acid residue of ribosomal protein uS12. The polypeptide is Ribosomal protein uS12 methylthiotransferase RimO (Oleidesulfovibrio alaskensis (strain ATCC BAA-1058 / DSM 17464 / G20) (Desulfovibrio alaskensis)).